Here is a 431-residue protein sequence, read N- to C-terminus: Putative transcription factor R429 (431 aa).

The stretch at Asn-28 to Asp-95 forms a coiled coil. The segment at Ser-142–Lys-187 is disordered. Residues Gln-143–Asn-152 show a composition bias toward low complexity. The span at Gln-170–Gly-181 shows a compositional bias: polar residues. Residues Cys-218–Cys-241 fold into a zinc finger.

The protein belongs to the nucleo-cytoplasmic large DNA viruses (NCLDVs) VLTF-3 family.

Putative transcription factor. This chain is Putative transcription factor R429, found in Acanthamoeba polyphaga (Amoeba).